The following is a 108-amino-acid chain: Succinate dehydrogenase assembly factor 4, mitochondrial (108 aa).

The transit peptide at 1-20 directs the protein to the mitochondrion; that stretch reads MTPSRLPWLLSWVSATAWRA. A disordered region spans residues 31–108; the sequence is RKTSSSQGGK…WERKGRCIDF (78 aa). Basic and acidic residues-rich tracts occupy residues 52–87 and 95–108; these read KLPE…EKGG and RYGD…CIDF.

This sequence belongs to the SDHAF4 family. In terms of assembly, interacts with SDHA in its FAD-bound form.

Its subcellular location is the mitochondrion matrix. In terms of biological role, plays an essential role in the assembly of succinate dehydrogenase (SDH), an enzyme complex (also referred to as respiratory complex II) that is a component of both the tricarboxylic acid (TCA) cycle and the mitochondrial electron transport chain, and which couples the oxidation of succinate to fumarate with the reduction of ubiquinone (coenzyme Q) to ubiquinol. Binds to the flavoprotein subunit SDHA in its FAD-bound form, blocking the generation of excess reactive oxygen species (ROS) and facilitating its assembly with the iron-sulfur protein subunit SDHB into the SDH catalytic dimer. The polypeptide is Succinate dehydrogenase assembly factor 4, mitochondrial (Homo sapiens (Human)).